A 260-amino-acid chain; its full sequence is Troponin I 3 (260 aa).

The segment covering 192 to 219 (DLDEIMAKKKGTADGKPEWSKKEKKEEE) has biased composition (basic and acidic residues). The segment at 192–260 (DLDEIMAKKK…EEEEEEEEEE (69 aa)) is disordered. The segment covering 231-260 (PEAEPEPEAAEPAAEEPEAEEEEEEEEEEE) has biased composition (acidic residues).

The protein belongs to the troponin I family. As to expression, expressed in body wall muscle from first larval stage to adult. In adults expression is predominantly in vulval and anal muscles, body wall muscle expression is weaker. Also expressed in vulval muscles of hermaphrodites and the sex muscles of males.

Its function is as follows. Troponin I is the inhibitory subunit of troponin, the thin filament regulatory complex which confers calcium-sensitivity to muscle actomyosin ATPase activity. This Caenorhabditis elegans protein is Troponin I 3 (tni-3).